The primary structure comprises 114 residues: UPF0342 protein LVIS_1488 (114 aa).

It belongs to the UPF0342 family.

The protein is UPF0342 protein LVIS_1488 of Levilactobacillus brevis (strain ATCC 367 / BCRC 12310 / CIP 105137 / JCM 1170 / LMG 11437 / NCIMB 947 / NCTC 947) (Lactobacillus brevis).